Consider the following 98-residue polypeptide: DNA-binding protein Fis (98 aa).

The segment at residues 74–93 (QTRAALMMGINRGTLRKKLK) is a DNA-binding region (H-T-H motif).

The protein belongs to the transcriptional regulatory Fis family. Homodimer.

Activates ribosomal RNA transcription. Plays a direct role in upstream activation of rRNA promoters. This is DNA-binding protein Fis from Photorhabdus laumondii subsp. laumondii (strain DSM 15139 / CIP 105565 / TT01) (Photorhabdus luminescens subsp. laumondii).